A 146-amino-acid chain; its full sequence is Anti-sigma F factor (146 aa).

It belongs to the anti-sigma-factor family.

It carries out the reaction L-seryl-[protein] + ATP = O-phospho-L-seryl-[protein] + ADP + H(+). The catalysed reaction is L-threonyl-[protein] + ATP = O-phospho-L-threonyl-[protein] + ADP + H(+). Its function is as follows. Binds to sigma F and blocks its ability to form an RNA polymerase holoenzyme (E-sigma F). Phosphorylates SpoIIAA on a serine residue. This phosphorylation may enable SpoIIAA to act as an anti-anti-sigma factor that counteracts SpoIIAB and thus releases sigma F from inhibition. This Bacillus subtilis (strain 168) protein is Anti-sigma F factor (spoIIAB).